We begin with the raw amino-acid sequence, 150 residues long: Large ribosomal subunit protein bL9 (150 aa).

This sequence belongs to the bacterial ribosomal protein bL9 family.

Functionally, binds to the 23S rRNA. The protein is Large ribosomal subunit protein bL9 of Idiomarina loihiensis (strain ATCC BAA-735 / DSM 15497 / L2-TR).